The primary structure comprises 394 residues: N-acetylgalactosamine-6-phosphate deacetylase (394 aa).

Glu-137 is a Zn(2+) binding site. 148–149 serves as a coordination point for substrate; sequence CH. Positions 201 and 222 each coordinate Zn(2+). Substrate-binding positions include 225-226, Arg-233, and 254-257; these read NG and DGQH. The active-site Proton donor/acceptor is Asp-280. Substrate is bound at residue 313–315; sequence LAG.

The protein belongs to the metallo-dependent hydrolases superfamily. NagA family.

Its subcellular location is the cytoplasm. It carries out the reaction N-acetyl-D-galactosamine 6-phosphate + H2O = D-galactosamine 6-phosphate + acetate. The enzyme catalyses N-acetyl-D-glucosamine 6-phosphate + H2O = D-glucosamine 6-phosphate + acetate. Its function is as follows. Involved in the pathway of N-acetyl-D-galactosamine degradation. Catalyzes the conversion of N-acetyl-D-galactosamine 6-phosphate to D-galactosamine 6-phosphate and acetate. It can also catalyze the conversion of N-acetyl-D-glucosamine 6-phosphate. This Shewanella sp. (strain ANA-3) protein is N-acetylgalactosamine-6-phosphate deacetylase.